A 148-amino-acid chain; its full sequence is Large ribosomal subunit protein bL9 (148 aa).

The protein belongs to the bacterial ribosomal protein bL9 family.

In terms of biological role, binds to the 23S rRNA. The polypeptide is Large ribosomal subunit protein bL9 (Pseudomonas fluorescens (strain Pf0-1)).